Reading from the N-terminus, the 179-residue chain is Adenine phosphoribosyltransferase (179 aa).

The protein belongs to the purine/pyrimidine phosphoribosyltransferase family. Homodimer.

It is found in the cytoplasm. The catalysed reaction is AMP + diphosphate = 5-phospho-alpha-D-ribose 1-diphosphate + adenine. Its pathway is purine metabolism; AMP biosynthesis via salvage pathway; AMP from adenine: step 1/1. Functionally, catalyzes a salvage reaction resulting in the formation of AMP, that is energically less costly than de novo synthesis. In Nitrobacter hamburgensis (strain DSM 10229 / NCIMB 13809 / X14), this protein is Adenine phosphoribosyltransferase.